Consider the following 233-residue polypeptide: MIDENHPMRAAGNFFGRRHGKPLRPHQSNLFEDLLPRLKLDLATPAPQDLRSLFEAPVETVRMEIGFGGGEHLHHESGRYPQSGFIGVEPFINGMAKMLAALDQAPRPNLRLYDEDATAVLDWLPDASLAGIDLFYPDPWHKRRHWKRRFVSDANLDRFARVLKPGAKFRFASDIEHYVNWTLQHCRRHAAFDWQAESPADWNDAYEGWPGTRYEAKAFHEGRRAAYLTFIRR.

Residues 1–22 (MIDENHPMRAAGNFFGRRHGKP) form a disordered region. Residues Glu64, Glu89, Asp116, and Asp138 each contribute to the S-adenosyl-L-methionine site. Residue Asp138 is part of the active site. Substrate-binding positions include Lys142, Asp174, and 212-215 (TRYE).

The protein belongs to the class I-like SAM-binding methyltransferase superfamily. TrmB family.

The catalysed reaction is guanosine(46) in tRNA + S-adenosyl-L-methionine = N(7)-methylguanosine(46) in tRNA + S-adenosyl-L-homocysteine. The protein operates within tRNA modification; N(7)-methylguanine-tRNA biosynthesis. In terms of biological role, catalyzes the formation of N(7)-methylguanine at position 46 (m7G46) in tRNA. This is tRNA (guanine-N(7)-)-methyltransferase from Brucella abortus (strain 2308).